A 341-amino-acid polypeptide reads, in one-letter code: Glyceraldehyde-3-phosphate dehydrogenase 2 (341 aa).

NAD(+)-binding positions include 13-14, Asp-35, and Lys-85; that span reads RI. Residues 157–159, Thr-188, 217–218, and Arg-240 contribute to the D-glyceraldehyde 3-phosphate site; these read SCT and TG. The Nucleophile role is filled by Cys-158. Asn-322 is an NAD(+) binding site.

The protein belongs to the glyceraldehyde-3-phosphate dehydrogenase family. In terms of assembly, homotetramer.

The protein resides in the cytoplasm. The enzyme catalyses D-glyceraldehyde 3-phosphate + phosphate + NAD(+) = (2R)-3-phospho-glyceroyl phosphate + NADH + H(+). It participates in carbohydrate degradation; glycolysis; pyruvate from D-glyceraldehyde 3-phosphate: step 1/5. This is Glyceraldehyde-3-phosphate dehydrogenase 2 from Caenorhabditis briggsae.